Here is an 895-residue protein sequence, read N- to C-terminus: MDLKKTLLMPKTSFAMQANLSTSEKNFHDFWKDKKVFQKLKKQNKGKQIKILHDGPPYANGSIHVGHALNKILKDFILRSWLYEGYDVVFIPGWDCHGLPIEHAVSKKNPSSYSNLSTVEKRKLCHQFALSQIAVQKEQFQRLGLLNDFQNCYYTIDESFQFKELELFLQAIKKGLIFQDLKPTYWSPISRTSLAEAEIEYKEVNSIALYLTFKVSKSDFLDENANLLVWTTTPWTLPTNQAIAIHPDFDYLLFEYNQQKFVILEKLFEVFTNKLNWTNAIKLKKFKGSNLKNSSYSHCFYNKVLPVLMGIHVVDNEGTGIVHSSPAFGIDDFYLCQKNKIKEVLISIDEKGVFNNLLNDKELENCFYLKANDLIINRLKQNNSFIFSEVISHREPHDWRSKTPVIYRASKQLFIKTKSIKKQLKKQINQVNFLNSKNQLRLKEMLLQRDEWCISRQRVWGLPIPIVYANNKPLLDFSTIQYTIKQLKKHGIDSWFEKDVTCFLKPDKTKKWVKYHKEIDTLDVWFDSGSSYNVLEINKYGSIADLYIEGSDQYRGWFNSSSNCGIIQNDLIPFKSLVSHGFTLDENGNKMSKSLGNIVDPLKICDQYGADILRLWVANTDWQIDNKIGVNILKQVAEQYRRIRNSLLRFILGNINGFNFTSMDDYKFSLEDKIVIHKTNSLVEQIEKFLEKYNFLGCLKVINKFVLWLSSWYFEIIKDTLYCDAKNNPNRLAKQAVLNYIFTQLISFLNIFIPHTAEDAWKNYSFNKKPISVNLFTKPTVFKVANSKNLENIYKTFTSIKNAAFKEIEKLRKEGLISKNNQIELTVGINKKIPKKLKDNLALWLNVNSVNLTNNENEIKVKKTKKTMCERCWNFQTIIKQKLDHNLCSRCFKVC.

Residues 57-67 (PYANGSIHVGH) carry the 'HIGH' region motif. E549 is a binding site for L-isoleucyl-5'-AMP. The 'KMSKS' region signature appears at 590-594 (KMSKS). K593 contributes to the ATP binding site. Positions 869, 872, 888, and 891 each coordinate Zn(2+).

This sequence belongs to the class-I aminoacyl-tRNA synthetase family. IleS type 1 subfamily. As to quaternary structure, monomer. Requires Zn(2+) as cofactor.

The protein resides in the cytoplasm. The catalysed reaction is tRNA(Ile) + L-isoleucine + ATP = L-isoleucyl-tRNA(Ile) + AMP + diphosphate. Its function is as follows. Catalyzes the attachment of isoleucine to tRNA(Ile). As IleRS can inadvertently accommodate and process structurally similar amino acids such as valine, to avoid such errors it has two additional distinct tRNA(Ile)-dependent editing activities. One activity is designated as 'pretransfer' editing and involves the hydrolysis of activated Val-AMP. The other activity is designated 'posttransfer' editing and involves deacylation of mischarged Val-tRNA(Ile). In Mycoplasma genitalium (strain ATCC 33530 / DSM 19775 / NCTC 10195 / G37) (Mycoplasmoides genitalium), this protein is Isoleucine--tRNA ligase.